The following is a 117-amino-acid chain: Probable non-functional immunoglobulin kappa variable 1D-42 (117 aa).

A signal peptide spans 1 to 22 (MDMRVPAQLLGLLLLWLPGVRF). A framework-1 region spans residues 23 to 45 (DIQMTQSPSFLSASVGDRVSIIC). The 95-residue stretch at 23–117 (DIQMTQSPSF…YYCKQDFSYP (95 aa)) folds into the Ig-like domain. Cysteine 45 and cysteine 110 are oxidised to a cystine. The interval 46–56 (WASEGISSNLA) is complementarity-determining-1. Residues 57–71 (WYLQKPGKSPKLFLY) are framework-2. The segment at 72 to 78 (DAKDLHP) is complementarity-determining-2. The framework-3 stretch occupies residues 79–110 (GVSSRFSGRGSGTDFTLTIISLKPEDFAAYYC). The segment at 111–117 (KQDFSYP) is complementarity-determining-3.

In terms of assembly, immunoglobulins are composed of two identical heavy chains and two identical light chains; disulfide-linked.

It is found in the secreted. It localises to the cell membrane. Its function is as follows. Probable non-functional open reading frame (ORF) of V region of the variable domain of immunoglobulin light chains. Non-functional ORF generally cannot participate in the synthesis of a productive immunoglobulin chain due to altered V-(D)-J or switch recombination and/or splicing site (at mRNA level) and/or conserved amino acid change (protein level). Immunoglobulins, also known as antibodies, are membrane-bound or secreted glycoproteins produced by B lymphocytes. In the recognition phase of humoral immunity, the membrane-bound immunoglobulins serve as receptors which, upon binding of a specific antigen, trigger the clonal expansion and differentiation of B lymphocytes into immunoglobulins-secreting plasma cells. Secreted immunoglobulins mediate the effector phase of humoral immunity, which results in the elimination of bound antigens. The antigen binding site is formed by the variable domain of one heavy chain, together with that of its associated light chain. Thus, each immunoglobulin has two antigen binding sites with remarkable affinity for a particular antigen. The variable domains are assembled by a process called V-(D)-J rearrangement and can then be subjected to somatic hypermutations which, after exposure to antigen and selection, allow affinity maturation for a particular antigen. This is Probable non-functional immunoglobulin kappa variable 1D-42 from Homo sapiens (Human).